A 386-amino-acid chain; its full sequence is Succinate--CoA ligase [ADP-forming] subunit beta (386 aa).

The 236-residue stretch at Lys-9–Ala-244 folds into the ATP-grasp domain. ATP contacts are provided by residues Lys-46, Gly-53–Gly-55, Glu-99, Leu-102, and Glu-107. Mg(2+)-binding residues include Asn-199 and Asp-213. Residues Asn-264 and Gly-321 to Val-323 contribute to the substrate site.

Belongs to the succinate/malate CoA ligase beta subunit family. As to quaternary structure, heterotetramer of two alpha and two beta subunits. Mg(2+) is required as a cofactor.

The catalysed reaction is succinate + ATP + CoA = succinyl-CoA + ADP + phosphate. The enzyme catalyses GTP + succinate + CoA = succinyl-CoA + GDP + phosphate. It functions in the pathway carbohydrate metabolism; tricarboxylic acid cycle; succinate from succinyl-CoA (ligase route): step 1/1. Succinyl-CoA synthetase functions in the citric acid cycle (TCA), coupling the hydrolysis of succinyl-CoA to the synthesis of either ATP or GTP and thus represents the only step of substrate-level phosphorylation in the TCA. The beta subunit provides nucleotide specificity of the enzyme and binds the substrate succinate, while the binding sites for coenzyme A and phosphate are found in the alpha subunit. This Thiobacillus denitrificans (strain ATCC 25259 / T1) protein is Succinate--CoA ligase [ADP-forming] subunit beta.